The chain runs to 147 residues: Phospholipase A2 inhibitor subunit A (147 aa).

The C-type lectin domain occupies 62 to 143; sequence EICEEAGGHI…DENLLVVCEF (82 aa). Disulfide bonds link cysteine 64–cysteine 141 and cysteine 119–cysteine 133. Asparagine 103 carries an N-linked (GlcNAc...) asparagine glycan.

It belongs to the alpha-type phospholipase A2 inhibitor family. In terms of assembly, homo- or heterotrimer; homotrimer of PLI-A chains, two PLI-A and one PLI-B chains, one PLI-A and two PLI-B chains, and homotrimer of PLI-B chains (with a ratio of 1:3:3:1). As to expression, expressed by the liver.

The protein localises to the secreted. Its function is as follows. PLI binds directly phospholipase A2 in the presence or absence of calcium. Inhibitory activity of the PLI-A homotrimer is more specific than that of the PLI-B homotrimer. The sequence is that of Phospholipase A2 inhibitor subunit A from Protobothrops flavoviridis (Habu).